We begin with the raw amino-acid sequence, 423 residues long: Chitinase 1 (423 aa).

A signal peptide spans 1–22; that stretch reads MLSFVKKSIALVAALQAVTALA. The propeptide occupies 23–34; sequence TPISSEAGVEKR. The GH18 domain maps to 38-401; the sequence is FANAVYFTNW…STSHQGLGSQ (364 aa). Chitin-binding positions include 102 to 103 and 129 to 132; these read GT and GGWT. The Proton donor role is filled by glutamate 171. Residues tyrosine 172, 237 to 240, and tryptophan 378 each bind chitin; that span reads MAYD.

This sequence belongs to the glycosyl hydrolase 18 family. Chitinase class V subfamily.

The protein localises to the secreted. The enzyme catalyses Random endo-hydrolysis of N-acetyl-beta-D-glucosaminide (1-&gt;4)-beta-linkages in chitin and chitodextrins.. The sequence is that of Chitinase 1 (CHI1) from Aphanocladium album (Wheat rust fungus).